Reading from the N-terminus, the 149-residue chain is Deoxyuridine 5'-triphosphate nucleotidohydrolase (149 aa).

Substrate contacts are provided by residues 68–70, N81, 85–87, and K95; these read RSG and TVD.

It belongs to the dUTPase family. It depends on Mg(2+) as a cofactor.

The enzyme catalyses dUTP + H2O = dUMP + diphosphate + H(+). Its pathway is pyrimidine metabolism; dUMP biosynthesis; dUMP from dCTP (dUTP route): step 2/2. Functionally, this enzyme is involved in nucleotide metabolism: it produces dUMP, the immediate precursor of thymidine nucleotides and it decreases the intracellular concentration of dUTP so that uracil cannot be incorporated into DNA. This Neorickettsia sennetsu (strain ATCC VR-367 / Miyayama) (Ehrlichia sennetsu) protein is Deoxyuridine 5'-triphosphate nucleotidohydrolase.